Here is a 232-residue protein sequence, read N- to C-terminus: Lipopolysaccharide core heptose(II) kinase WaaY (232 aa).

The protein belongs to the protein kinase superfamily. RfaY/WaaY family.

The enzyme catalyses alpha-D-Glc-(1-&gt;3)-[L-alpha-D-Hep-(1-&gt;7)]-L-alpha-D-Hep-(1-&gt;3)-4-O-PO3(2-)-L-alpha-D-Hep-(1-&gt;5)-[alpha-Kdo-(2-&gt;4)]-alpha-Kdo-(2-&gt;6)-lipid A + ATP = alpha-D-Glc-(1-&gt;3)-[L-alpha-D-Hep-(1-&gt;7)]-4-O-PO3(2-)-L-alpha-D-Hep-(1-&gt;3)-4-O-PO3(2-)-L-alpha-D-Hep-(1-&gt;5)-[alpha-Kdo-(2-&gt;4)]-alpha-Kdo-(2-&gt;6)-lipid A + ADP + H(+). Its pathway is bacterial outer membrane biogenesis; LPS core biosynthesis. Its function is as follows. Kinase involved in the biosynthesis of the core oligosaccharide region of lipopolysaccharide (LPS). Catalyzes the phosphorylation of the second heptose unit (HepII) of the inner core. The polypeptide is Lipopolysaccharide core heptose(II) kinase WaaY (Escherichia coli (strain K12)).